A 217-amino-acid polypeptide reads, in one-letter code: U exon protein (217 aa).

Disordered regions lie at residues 68–110 (SKIF…TNHG) and 170–217 (EKEA…RQGR). Residues 202 to 217 (GGFQQPTGANQARQGR) are compositionally biased toward polar residues.

This sequence belongs to the adenoviridae U exon protein family.

It localises to the host nucleus. Its subcellular location is the host nucleoplasm. The protein resides in the host nucleolus. Might play a role in viral replication since it is associated with viral replication centers. Seems to have an effect on DBP localization. In Homo sapiens (Human), this protein is U exon protein.